The sequence spans 955 residues: MPRHLSRWGLAIAAIALGLSLLTRIHIETLWFTALGIPTVFLRRLAVQALLFSVVGIAITGLIGGNLRWAARHQTDQPDRPAPRLQLGGLLTVLTLLWIALLALTTQAILAAWNCQTGRALPFLPQILTLDWLQSSLITAGSWPLGMGLLLGVGSLVLFLWRPWPLLIGLSSLTSLAIALLTSREWLRIWPAFAAESVSDRDPIFQQDLAFYLFRLPALEVLQFDLWIGLAFSFCAVLAVYYLAKQSVSNAEFRGFAPSQQRHLVRLAIAIALFLAGHCWLAQRQLLFSELGAVYGIGFTDRWVKLPLLQVWMILFGIAAIALFWQSRRGLLPQRWIRNFQLAAIASVLIWVTLPAIVQQLVVQPNEIARELPYLKQAILFTRRAFGLDQIETRTFDPQPSLNRAVLAANRETVQNIRLWDTRPLLQSNRQLQQIRLYYSFPSAQIDRYRLQTSFGDALQQVIIAARELDYTAIPAAAKTWVNEHLVYTHGYGFTLSPVNSSAPDGLPRYFVKDIGANTRIIGDASLGISTEAVKAAISTENPRIYYGQLTRNYVFTPSRTQELDYPSGNDNVYNIYDGKGGVTLGNYAQRLLFSLYLRDWRLPFSGDLTAQTRVLFRRQIEDRVRAIAPFLRYDAEPYLVSVNADTAEASGLGRSSLFWILDAYTVSDRYPYADPGEQPFNYIRNSVKVIIDAYNGSVQFYIVDPKDPLIQTWSRLFPSLFQPIDAMAPVLRSHLRYPTDLFKAQSSQLLTYHVLDPQVFYNRDDQWAYPREIYAGETATVQPYYLITRLPTAASEEFLILTPFTPLGRNNMIAWLAGRSDGEEYGRLLLYEFPRQRLIFGPEQITARINQDPQISEQITLWNREGSRAAEGNLLVIPIDQALLYVEPLYLEASRNSLPALTRVITAYQDRIVMTPSLLESLQKLFPDSTPALTPLEQPVLTTEQSAVLNPDQP.

9 consecutive transmembrane segments (helical) span residues 12-32 (IAAI…TLWF), 45-65 (LAVQ…LIGG), 85-105 (LQLG…LALT), 141-161 (GSWP…LFLW), 163-183 (PWPL…LLTS), 224-244 (FDLW…YYLA), 263-283 (HLVR…WLAQ), 306-326 (LPLL…LFWQ), and 343-363 (AAIA…QLVV).

This sequence belongs to the UPF0182 family.

The protein localises to the cell membrane. The chain is UPF0182 protein syc2310_c from Synechococcus sp. (strain ATCC 27144 / PCC 6301 / SAUG 1402/1) (Anacystis nidulans).